A 326-amino-acid chain; its full sequence is Acetyl-coenzyme A carboxylase carboxyl transferase subunit beta (326 aa).

The CoA carboxyltransferase N-terminal domain occupies 32–301 (LWTKCPACGV…ILPPLNADSN (270 aa)). 4 residues coordinate Zn(2+): Cys-36, Cys-39, Cys-55, and Cys-58. The segment at 36–58 (CPACGVLTYTKDLQGNWMVCVEC) adopts a C4-type zinc-finger fold.

The protein belongs to the AccD/PCCB family. In terms of assembly, acetyl-CoA carboxylase is a heterohexamer composed of biotin carboxyl carrier protein (AccB), biotin carboxylase (AccC) and two subunits each of ACCase subunit alpha (AccA) and ACCase subunit beta (AccD). Zn(2+) is required as a cofactor.

The protein localises to the cytoplasm. It carries out the reaction N(6)-carboxybiotinyl-L-lysyl-[protein] + acetyl-CoA = N(6)-biotinyl-L-lysyl-[protein] + malonyl-CoA. It participates in lipid metabolism; malonyl-CoA biosynthesis; malonyl-CoA from acetyl-CoA: step 1/1. Its function is as follows. Component of the acetyl coenzyme A carboxylase (ACC) complex. Biotin carboxylase (BC) catalyzes the carboxylation of biotin on its carrier protein (BCCP) and then the CO(2) group is transferred by the transcarboxylase to acetyl-CoA to form malonyl-CoA. The protein is Acetyl-coenzyme A carboxylase carboxyl transferase subunit beta of Synechocystis sp. (strain ATCC 27184 / PCC 6803 / Kazusa).